Reading from the N-terminus, the 229-residue chain is 5'-methylthioadenosine/S-adenosylhomocysteine nucleosidase (229 aa).

The active-site Proton acceptor is the E12. Residues G78, I152, and 173–174 (ME) contribute to the substrate site. D197 (proton donor) is an active-site residue.

The protein belongs to the PNP/UDP phosphorylase family. MtnN subfamily.

It carries out the reaction S-adenosyl-L-homocysteine + H2O = S-(5-deoxy-D-ribos-5-yl)-L-homocysteine + adenine. The enzyme catalyses S-methyl-5'-thioadenosine + H2O = 5-(methylsulfanyl)-D-ribose + adenine. It catalyses the reaction 5'-deoxyadenosine + H2O = 5-deoxy-D-ribose + adenine. It functions in the pathway amino-acid biosynthesis; L-methionine biosynthesis via salvage pathway; S-methyl-5-thio-alpha-D-ribose 1-phosphate from S-methyl-5'-thioadenosine (hydrolase route): step 1/2. Functionally, catalyzes the irreversible cleavage of the glycosidic bond in both 5'-methylthioadenosine (MTA) and S-adenosylhomocysteine (SAH/AdoHcy) to adenine and the corresponding thioribose, 5'-methylthioribose and S-ribosylhomocysteine, respectively. Also cleaves 5'-deoxyadenosine, a toxic by-product of radical S-adenosylmethionine (SAM) enzymes, into 5-deoxyribose and adenine. In Mannheimia succiniciproducens (strain KCTC 0769BP / MBEL55E), this protein is 5'-methylthioadenosine/S-adenosylhomocysteine nucleosidase.